A 395-amino-acid polypeptide reads, in one-letter code: Phosphoprotein (395 aa).

A nuclear localization signal (NLS) region spans residues 65–72; it reads PVKPRRKK. The interval 178 to 217 is disordered; sequence NGVLHGSEIRSKSSSGVIPGVPQSRPQLASSPAHADPAPA. Residues 206–217 are compositionally biased toward low complexity; the sequence is ASSPAHADPAPA. The segment at 225–234 is nuclear export signal (NES); that stretch reads IIELLKGLDL.

This sequence belongs to the rubulavirus/avulavirus P protein family. Interacts with host ARHGAP26; this interaction promotes host RHOA activation. Interacts with host KPNA1 and KPNA6.

The protein resides in the host cytoplasm. Its function is as follows. Essential component of the RNA polymerase and the nascent chain assembly complex. Also required during RNA synthesis. Also plays a role in viral growth by promoting host RHOA activation and thus actin formation via ARHGAP26 inhibition. The protein is Phosphoprotein (P/V) of Human parainfluenza 2 virus (HPIV-2).